The following is a 2242-amino-acid chain: Multifunctional protein CAD (2242 aa).

The GATase (Glutamine amidotransferase) stretch occupies residues 1 to 365 (MATLFLDDGS…CARDVKLGVN (365 aa)). L-glutamine-binding residues include S44, G222, and G224. A Glutamine amidotransferase type-1 domain is found at 177–363 (KIMAVDCGMK…LECARDVKLG (187 aa)). Residue C252 is the Nucleophile; for GATase activity of the active site. L-glutamine contacts are provided by L253, Q256, N294, G296, and F297. Residues H336 and E338 each act as for GATase activity in the active site. Residues 366-397 (LDKTVKGRVISHYSFKNGTENSKTPPGRIQPH) are linker. The segment at 398–937 (KVLILGSGGL…GEGHDLDFTK (540 aa)) is CPSase A. The CPSase (Carbamoyl-phosphate synthase) stretch occupies residues 398-1462 (KVLILGSGGL…TPPVKTHIDS (1065 aa)). Residues R518, R558, G564, G565, K595, E602, G628, I629, H630, Q671, and E685 each contribute to the ATP site. 2 ATP-grasp domains span residues 522–714 (VEKM…KLAL) and 1057–1248 (SRML…KVIM). Mg(2+) is bound by residues Q671, E685, and N687. Q671, E685, and N687 together coordinate Mn(2+). A CPSase B region spans residues 938-1462 (PHVMVIGSGV…TPPVKTHIDS (525 aa)). 10 residues coordinate ATP: R1093, K1132, I1134, E1139, G1164, V1165, H1166, S1167, Q1207, and E1219. Mg(2+) is bound by residues Q1207, E1219, and N1221. Mn(2+) contacts are provided by Q1207, E1219, and N1221. The MGS-like domain maps to 1313-1469 (FKIPKKNILL…IDSMSSHKLI (157 aa)). Residues 1463 to 1796 (MSSHKLIRLP…KGRVRRVVLR (334 aa)) are DHOase (dihydroorotase). The Zn(2+) site is built by H1478 and H1480. (S)-dihydroorotate contacts are provided by R1482 and N1512. Residues K1563, H1597, C1620, H1621, and E1644 each contribute to the Zn(2+) site. K1563 carries the post-translational modification N6-carboxylysine. R1668 provides a ligand contact to (S)-dihydroorotate. Residue D1693 coordinates Zn(2+). Residue D1693 is the For DHOase activity of the active site. 2 residues coordinate (S)-dihydroorotate: H1697 and P1709. The segment at 1797 to 1934 (GEVAYIDGQV…QAVPHPYSLL (138 aa)) is linker. The tract at residues 1829–1862 (PTTVKTPEHSKPTQTETVRTRTASPRRLASSGPA) is disordered. Over residues 1840 to 1851 (PTQTETVRTRTA) the composition is skewed to polar residues. The interval 1935–2242 (LHPFVGQHIL…ALLATVLGKF (308 aa)) is ATCase (Aspartate transcarbamylase). R1992 and T1993 together coordinate carbamoyl phosphate. K2020 is an L-aspartate binding site. Residues R2041, H2069, and Q2072 each contribute to the carbamoyl phosphate site. The L-aspartate site is built by R2102 and R2163. Carbamoyl phosphate-binding residues include L2202 and P2203.

In the N-terminal section; belongs to the CarA family. This sequence in the 2nd section; belongs to the CarB family. The protein in the 3rd section; belongs to the metallo-dependent hydrolases superfamily. DHOase family. CAD subfamily. It in the C-terminal section; belongs to the aspartate/ornithine carbamoyltransferase superfamily. ATCase family. Homohexamer. The cofactor is Mg(2+). Mn(2+) serves as cofactor. It depends on Zn(2+) as a cofactor. As to expression, present in the testis but not in the liver.

The protein resides in the cytoplasm. It localises to the nucleus. It catalyses the reaction hydrogencarbonate + L-glutamine + 2 ATP + H2O = carbamoyl phosphate + L-glutamate + 2 ADP + phosphate + 2 H(+). The catalysed reaction is L-glutamine + H2O = L-glutamate + NH4(+). It carries out the reaction hydrogencarbonate + NH4(+) + 2 ATP = carbamoyl phosphate + 2 ADP + phosphate + 2 H(+). The enzyme catalyses carbamoyl phosphate + L-aspartate = N-carbamoyl-L-aspartate + phosphate + H(+). It catalyses the reaction (S)-dihydroorotate + H2O = N-carbamoyl-L-aspartate + H(+). Its pathway is pyrimidine metabolism; UMP biosynthesis via de novo pathway; (S)-dihydroorotate from bicarbonate: step 1/3. It participates in pyrimidine metabolism; UMP biosynthesis via de novo pathway; (S)-dihydroorotate from bicarbonate: step 2/3. The protein operates within pyrimidine metabolism; UMP biosynthesis via de novo pathway; (S)-dihydroorotate from bicarbonate: step 3/3. With respect to regulation, allosterically regulated and controlled by phosphorylation. 5-phosphoribose 1-diphosphate is an activator while UMP is an inhibitor of the CPSase reaction. Its function is as follows. Multifunctional protein that encodes the first 3 enzymatic activities of the de novo pyrimidine pathway: carbamoylphosphate synthetase (CPSase; EC 6.3.5.5), aspartate transcarbamylase (ATCase; EC 2.1.3.2) and dihydroorotase (DHOase; EC 3.5.2.3). The CPSase-function is accomplished in 2 steps, by a glutamine-dependent amidotransferase activity (GATase) that binds and cleaves glutamine to produce ammonia, followed by an ammonium-dependent carbamoyl phosphate synthetase, which reacts with the ammonia, hydrogencarbonate and ATP to form carbamoyl phosphate. The endogenously produced carbamoyl phosphate is sequestered and channeled to the ATCase active site. ATCase then catalyzes the formation of carbamoyl-L-aspartate from L-aspartate and carbamoyl phosphate. In the last step, DHOase catalyzes the cyclization of carbamoyl aspartate to dihydroorotate. The chain is Multifunctional protein CAD (CAD) from Squalus acanthias (Spiny dogfish).